Here is a 135-residue protein sequence, read N- to C-terminus: Ribosome-binding factor A (135 aa).

It belongs to the RbfA family. As to quaternary structure, monomer. Binds 30S ribosomal subunits, but not 50S ribosomal subunits or 70S ribosomes.

It localises to the cytoplasm. Its function is as follows. One of several proteins that assist in the late maturation steps of the functional core of the 30S ribosomal subunit. Associates with free 30S ribosomal subunits (but not with 30S subunits that are part of 70S ribosomes or polysomes). Required for efficient processing of 16S rRNA. May interact with the 5'-terminal helix region of 16S rRNA. This is Ribosome-binding factor A from Aliivibrio salmonicida (strain LFI1238) (Vibrio salmonicida (strain LFI1238)).